Reading from the N-terminus, the 182-residue chain is Ribosome-recycling factor (182 aa).

It belongs to the RRF family.

Its subcellular location is the cytoplasm. Its function is as follows. Responsible for the release of ribosomes from messenger RNA at the termination of protein biosynthesis. May increase the efficiency of translation by recycling ribosomes from one round of translation to another. The chain is Ribosome-recycling factor from Picosynechococcus sp. (strain ATCC 27264 / PCC 7002 / PR-6) (Agmenellum quadruplicatum).